A 346-amino-acid chain; its full sequence is Biotin synthase (346 aa).

A Radical SAM core domain is found at 38-256 (QQVQVSTLLS…IAVARIMMPT (219 aa)). Positions 53, 57, and 60 each coordinate [4Fe-4S] cluster. Residues Cys97, Cys128, Cys188, and Arg260 each coordinate [2Fe-2S] cluster.

It belongs to the radical SAM superfamily. Biotin synthase family. As to quaternary structure, homodimer. It depends on [4Fe-4S] cluster as a cofactor. [2Fe-2S] cluster serves as cofactor.

It catalyses the reaction (4R,5S)-dethiobiotin + (sulfur carrier)-SH + 2 reduced [2Fe-2S]-[ferredoxin] + 2 S-adenosyl-L-methionine = (sulfur carrier)-H + biotin + 2 5'-deoxyadenosine + 2 L-methionine + 2 oxidized [2Fe-2S]-[ferredoxin]. The protein operates within cofactor biosynthesis; biotin biosynthesis; biotin from 7,8-diaminononanoate: step 2/2. Catalyzes the conversion of dethiobiotin (DTB) to biotin by the insertion of a sulfur atom into dethiobiotin via a radical-based mechanism. The polypeptide is Biotin synthase (Salmonella agona (strain SL483)).